Reading from the N-terminus, the 1234-residue chain is MVHPVQVGKRTRMSFAKVKDVAEMPNLIEIQLDSYKWFLDAGLYEVFDDINPISNFTGNLVLEFVGYTLDMDNIKYSVEECKERDTTYAAPLKVAVRLQNKETGEIKEQEVFMGDFPLMTEQGTFIINGAERVIVSQLVRSPGVYYNYNVDKTGKKLFSATVIPNRGAWLEYETDSNDVIYVRIDKTRKLPISILGRAMGFGSDQELLEYFGEEERFKATIEKDNTKTKEEALLEIYKRLRPGEPPTVDSAISLIDSLFFDAKRYDLSRVGRYKFNKKLAIGLRIANQIAAEDIVDKLTGEVLVAKGEKISRANAEEIQNRGINSVDVLVEDRVIRIIGNHFVDIHKCVDFDISDLNIRELVHYPTLREILDNYSDEETIKEEIKKNMTRLIPKHIIKDDIFATISYQIGLAYNIGYVDDIDHLGNRRLRSVGELLQNQFRIGLSRMERVVKERMTIQDQEAITPQQLINIRPVAAAIKEFFGSSQLSQFMDQTNPLSELTHKRRLSALGPGGLSRERAGFEVRDVHHSHYGRMCPIETPEGPNIGLINSLATYAKVNEYGFIETPYRVVDKAEGRVTGEIRYFTADEEDQYLVAQANEPLDENGCFIDKKVTVRDKGEVLVVPSKDVDLMDVSPRQLVSVATAMIPFLENDDASRALMGSNMQRQAVPLLKPYAPIVGTGIEYKAAVDSGVLPKAKNAGEVVYVSANEVRVKRELDGGVDTYRLLKFKRSNQGTCINQRPIVAKGDWVLKGEVLADGPSTDLGEIALGKNIRMGFITWEGYNYEDAMLISEELVREDVFTSIHIEEYECEARDTKLGPEEITRDIPNVSEDALKDIDERGIIRIGAEVRSGDILVGKVTPKGETELTAEERLLRAIFGEKAREVRDTSLRVPHGEAGIIVDVKVFTRENGDDLSPGVNELVRCYIAQKRKISVGDKMAGRHGNKGVISRVLPEEDMPFLPDGRPLQICLNPLGVPSRMNIGQVLEVHLGWAASALGWHIATPVFDGATETDIEDCLEKAGYNRNGKTVLRDGRTGEEFDNEVTVGIMYILKLAHLVDDKIHARSTGPYSLVTQQPLGGKAQFGGQRFGEMEVWALEAYGAAHTLQEILTVKSDDVVGRVKTYEAIVKGENIPEPGVPESFKVLIKELQALCLDVKVLNDNNQEVKFKELAEDDDEIEVLEVNMEGTEDSTTEEAKEEKGEAYIPAEEIDEEIDYENIDLLDFTSDLDIEDDFN.

It belongs to the RNA polymerase beta chain family. In terms of assembly, the RNAP catalytic core consists of 2 alpha, 1 beta, 1 beta' and 1 omega subunit. When a sigma factor is associated with the core the holoenzyme is formed, which can initiate transcription.

It carries out the reaction RNA(n) + a ribonucleoside 5'-triphosphate = RNA(n+1) + diphosphate. Its function is as follows. DNA-dependent RNA polymerase catalyzes the transcription of DNA into RNA using the four ribonucleoside triphosphates as substrates. In Clostridium perfringens (strain ATCC 13124 / DSM 756 / JCM 1290 / NCIMB 6125 / NCTC 8237 / Type A), this protein is DNA-directed RNA polymerase subunit beta.